Consider the following 387-residue polypeptide: G-protein coupled receptor homolog R33 (387 aa).

Residues 1–33 (MDVLLGTEELEDELHQLHFNYTCVPSLGLSVAR) are Extracellular-facing. N-linked (GlcNAc...) asparagine; by host glycosylation is present at asparagine 20. Residues 34-61 (DAETAVNFLIVLVGGPMNFLVLATQMLS) traverse the membrane as a helical segment. The Cytoplasmic portion of the chain corresponds to 62–71 (NRSYSVSTPT). A helical membrane pass occupies residues 72 to 94 (LYMTNLYLANLLTVATLPFLMLS). The Extracellular portion of the chain corresponds to 95-107 (NRGLVGSSPEGCK). The chain crosses the membrane as a helical span at residues 108–129 (IAALAYYATCTAGFATLMLIAI). Over 130 to 150 (NRYRVIHQRTRSGAGSKRQTY) the chain is Cytoplasmic. Residues 151–169 (AVLAVTWLASLMCASPAPL) form a helical membrane-spanning segment. Topologically, residues 170-204 (YATVMAHDSADALAFETCIIYFSYDQVKTVLATFK) are extracellular. A helical membrane pass occupies residues 205-224 (ILITMIWGITPVVMMSWFYV). Over 225–244 (FFYRRLKLTSYRRRSQTLTF) the chain is Cytoplasmic. The chain crosses the membrane as a helical span at residues 245–268 (VTTLMLSFLVVQTPFVAIMSYDSY). The Extracellular portion of the chain corresponds to 269–285 (GVLNWPINCDTINKRDA). A helical membrane pass occupies residues 286–309 (VSMLARVVPNFHCLLNPVLYAFLG). Residues 310–387 (RDFNKRFILC…PPPPPPPPNC (78 aa)) are Cytoplasmic-facing. Residues 368–387 (RLRALGRPPPPPPPPPPPNC) are disordered. Over residues 374 to 387 (RPPPPPPPPPPPNC) the composition is skewed to pro residues.

Belongs to the G-protein coupled receptor 1 family.

The protein resides in the host cell membrane. In terms of biological role, plays an important role in vivo, in particular in the dissemination to or replication in the salivary gland. The chain is G-protein coupled receptor homolog R33 from Rattus.